Here is a 356-residue protein sequence, read N- to C-terminus: Leucoanthocyanidin dioxygenase (356 aa).

Tyrosine 142 and lysine 213 together coordinate substrate. The Fe2OG dioxygenase domain maps to 208–307 (LLLQMKINYY…RISWAVFCEP (100 aa)). 215-217 (NYY) provides a ligand contact to 2-oxoglutarate. Histidine 232 is a Fe cation binding site. Position 233 (threonine 233) interacts with substrate. Fe cation is bound by residues aspartate 234 and histidine 288. 298-300 (RIS) provides a ligand contact to 2-oxoglutarate. Substrate is bound by residues glutamate 306 and lysine 341.

The protein belongs to the iron/ascorbate-dependent oxidoreductase family. Requires L-ascorbate as cofactor. It depends on Fe(2+) as a cofactor. Expressed in young seedlings (at protein level).

The enzyme catalyses a (2R,3S,4S)-leucoanthocyanidin + 2-oxoglutarate + O2 = a 4-H-anthocyanidin with a 3-hydroxy group + succinate + CO2 + 2 H2O. It carries out the reaction (2R,3S,4S)-3,4-leucopelargonidin + 2-oxoglutarate + O2 = (4S)-2,3-dehydroleucopelargonidin + succinate + CO2 + H2O + H(+). It catalyses the reaction (2R,3S,4S)-leucocyanidin + 2-oxoglutarate + O2 = (4S)-2,3-dehydroleucocyanidin + succinate + CO2 + H2O + H(+). The protein operates within pigment biosynthesis; anthocyanin biosynthesis. Involved in anthocyanin and protoanthocyanidin biosynthesis by catalyzing the oxidation of leucoanthocyanidins into anthocyanidins. Possesses low flavonol synthase activity in vitro towards dihydrokaempferol and dihydroquercetin producing kaempferol and quercitin, respectively. In Arabidopsis thaliana (Mouse-ear cress), this protein is Leucoanthocyanidin dioxygenase (LDOX).